The primary structure comprises 104 residues: Large ribosomal subunit protein uL24 (104 aa).

It belongs to the universal ribosomal protein uL24 family. In terms of assembly, part of the 50S ribosomal subunit.

Its function is as follows. One of two assembly initiator proteins, it binds directly to the 5'-end of the 23S rRNA, where it nucleates assembly of the 50S subunit. In terms of biological role, one of the proteins that surrounds the polypeptide exit tunnel on the outside of the subunit. The chain is Large ribosomal subunit protein uL24 from Klebsiella pneumoniae (strain 342).